Here is a 286-residue protein sequence, read N- to C-terminus: Small ribosomal subunit protein uS15m (286 aa).

The transit peptide at 1–33 (MSIVGRNAILNLRISLCPLFMGKRSFVSSPVSN) directs the protein to the mitochondrion.

Belongs to the universal ribosomal protein uS15 family. As to quaternary structure, component of the mitochondrial small ribosomal subunit (mt-SSU). Mature yeast 74S mitochondrial ribosomes consist of a small (37S) and a large (54S) subunit. The 37S small subunit contains a 15S ribosomal RNA (15S mt-rRNA) and 34 different proteins. The 54S large subunit contains a 21S rRNA (21S mt-rRNA) and 46 different proteins. The precursor is processed in two steps involving mitochondrial intermediate peptidase (MIP) and mitochondrial processing peptidase (MPP).

The protein resides in the mitochondrion. In terms of biological role, component of the mitochondrial ribosome (mitoribosome), a dedicated translation machinery responsible for the synthesis of mitochondrial genome-encoded proteins, including at least some of the essential transmembrane subunits of the mitochondrial respiratory chain. The mitoribosomes are attached to the mitochondrial inner membrane and translation products are cotranslationally integrated into the membrane. In Saccharomyces cerevisiae (strain ATCC 204508 / S288c) (Baker's yeast), this protein is Small ribosomal subunit protein uS15m (MRPS28).